Consider the following 349-residue polypeptide: Protein-glutamate methylesterase/protein-glutamine glutaminase (349 aa).

The Response regulatory domain occupies 5 to 122 (KVLVVDDSAF…SLDLYKVKDE (118 aa)). Asp-56 is subject to 4-aspartylphosphate. The region spanning 156–349 (ARPQQAIVAI…AAAIVQLIGE (194 aa)) is the CheB-type methylesterase domain. Active-site residues include Ser-168, His-195, and Asp-291.

This sequence belongs to the CheB family. Post-translationally, phosphorylated by CheA. Phosphorylation of the N-terminal regulatory domain activates the methylesterase activity.

It is found in the cytoplasm. The enzyme catalyses [protein]-L-glutamate 5-O-methyl ester + H2O = L-glutamyl-[protein] + methanol + H(+). The catalysed reaction is L-glutaminyl-[protein] + H2O = L-glutamyl-[protein] + NH4(+). Its function is as follows. Involved in chemotaxis. Part of a chemotaxis signal transduction system that modulates chemotaxis in response to various stimuli. Catalyzes the demethylation of specific methylglutamate residues introduced into the chemoreceptors (methyl-accepting chemotaxis proteins or MCP) by CheR. Also mediates the irreversible deamidation of specific glutamine residues to glutamic acid. The sequence is that of Protein-glutamate methylesterase/protein-glutamine glutaminase from Geobacillus kaustophilus (strain HTA426).